The primary structure comprises 112 residues: ATP synthase epsilon chain (112 aa).

This sequence belongs to the ATPase epsilon chain family. In terms of assembly, F-type ATPases have 2 components, CF(1) - the catalytic core - and CF(0) - the membrane proton channel. CF(1) has five subunits: alpha(3), beta(3), gamma(1), delta(1), epsilon(1). CF(0) has three main subunits: a, b and c.

It localises to the cell inner membrane. Produces ATP from ADP in the presence of a proton gradient across the membrane. This chain is ATP synthase epsilon chain, found in Rickettsia peacockii (strain Rustic).